The chain runs to 380 residues: Cytochrome b (380 aa).

4 helical membrane passes run 34–54 (FGSL…LLAM), 78–99 (WLIR…YFHI), 114–134 (WNTG…GYVL), and 179–199 (FFAL…IHLT). Heme b is bound by residues His-84 and His-98. His-183 and His-197 together coordinate heme b. His-202 serves as a coordination point for a ubiquinone. The next 4 membrane-spanning stretches (helical) occupy residues 227-247 (LKDI…ALFS), 289-309 (LGGV…PFLH), 321-341 (ISQL…WVGS), and 348-368 (FIII…VLFP).

Belongs to the cytochrome b family. As to quaternary structure, the cytochrome bc1 complex contains 11 subunits: 3 respiratory subunits (MT-CYB, CYC1 and UQCRFS1), 2 core proteins (UQCRC1 and UQCRC2) and 6 low-molecular weight proteins (UQCRH/QCR6, UQCRB/QCR7, UQCRQ/QCR8, UQCR10/QCR9, UQCR11/QCR10 and a cleavage product of UQCRFS1). This cytochrome bc1 complex then forms a dimer. The cofactor is heme b.

It is found in the mitochondrion inner membrane. Its function is as follows. Component of the ubiquinol-cytochrome c reductase complex (complex III or cytochrome b-c1 complex) that is part of the mitochondrial respiratory chain. The b-c1 complex mediates electron transfer from ubiquinol to cytochrome c. Contributes to the generation of a proton gradient across the mitochondrial membrane that is then used for ATP synthesis. The protein is Cytochrome b (MT-CYB) of Pachyptila salvini (Salvin's prion).